The chain runs to 274 residues: Type II restriction enzyme HgiBI (274 aa).

This sequence belongs to the TdeIII type II restriction endonuclease family.

The enzyme catalyses Endonucleolytic cleavage of DNA to give specific double-stranded fragments with terminal 5'-phosphates.. A P subtype restriction enzyme that recognizes the double-stranded sequence 5'-GGWCC-3' and cleaves after G-1. This system is less active than isoschizomeric RM.HgiEI. The protein is Type II restriction enzyme HgiBI of Herpetosiphon aurantiacus (Herpetosiphon giganteus).